The primary structure comprises 518 residues: Adenine deaminase (518 aa).

It belongs to the metallo-dependent hydrolases superfamily. Adenine deaminase family. It depends on Mn(2+) as a cofactor.

The catalysed reaction is adenine + H2O + H(+) = hypoxanthine + NH4(+). The polypeptide is Adenine deaminase (Methanoculleus marisnigri (strain ATCC 35101 / DSM 1498 / JR1)).